We begin with the raw amino-acid sequence, 457 residues long: Bifunctional protein GlmU (457 aa).

The tract at residues Met-1–Arg-230 is pyrophosphorylase. UDP-N-acetyl-alpha-D-glucosamine-binding positions include Leu-9 to Gly-12, Lys-23, Gln-73, and Gly-78 to Thr-79. Asp-103 contributes to the Mg(2+) binding site. Residues Gly-140, Glu-155, Asn-170, and Asn-228 each contribute to the UDP-N-acetyl-alpha-D-glucosamine site. Asn-228 is a binding site for Mg(2+). The segment at Ile-231 to Asn-251 is linker. The tract at residues Gly-252–Lys-457 is N-acetyltransferase. 2 residues coordinate UDP-N-acetyl-alpha-D-glucosamine: Arg-333 and Lys-351. Catalysis depends on His-363, which acts as the Proton acceptor. 2 residues coordinate UDP-N-acetyl-alpha-D-glucosamine: Tyr-366 and Asn-377. Residues Asn-386–Tyr-387, Ala-423, and Arg-440 contribute to the acetyl-CoA site.

It in the N-terminal section; belongs to the N-acetylglucosamine-1-phosphate uridyltransferase family. The protein in the C-terminal section; belongs to the transferase hexapeptide repeat family. Homotrimer. The cofactor is Mg(2+).

Its subcellular location is the cytoplasm. The enzyme catalyses alpha-D-glucosamine 1-phosphate + acetyl-CoA = N-acetyl-alpha-D-glucosamine 1-phosphate + CoA + H(+). It carries out the reaction N-acetyl-alpha-D-glucosamine 1-phosphate + UTP + H(+) = UDP-N-acetyl-alpha-D-glucosamine + diphosphate. It participates in nucleotide-sugar biosynthesis; UDP-N-acetyl-alpha-D-glucosamine biosynthesis; N-acetyl-alpha-D-glucosamine 1-phosphate from alpha-D-glucosamine 6-phosphate (route II): step 2/2. It functions in the pathway nucleotide-sugar biosynthesis; UDP-N-acetyl-alpha-D-glucosamine biosynthesis; UDP-N-acetyl-alpha-D-glucosamine from N-acetyl-alpha-D-glucosamine 1-phosphate: step 1/1. Its pathway is bacterial outer membrane biogenesis; LPS lipid A biosynthesis. Catalyzes the last two sequential reactions in the de novo biosynthetic pathway for UDP-N-acetylglucosamine (UDP-GlcNAc). The C-terminal domain catalyzes the transfer of acetyl group from acetyl coenzyme A to glucosamine-1-phosphate (GlcN-1-P) to produce N-acetylglucosamine-1-phosphate (GlcNAc-1-P), which is converted into UDP-GlcNAc by the transfer of uridine 5-monophosphate (from uridine 5-triphosphate), a reaction catalyzed by the N-terminal domain. This Listeria innocua serovar 6a (strain ATCC BAA-680 / CLIP 11262) protein is Bifunctional protein GlmU.